We begin with the raw amino-acid sequence, 448 residues long: Phosphoglucosamine mutase (448 aa).

Serine 100 serves as the catalytic Phosphoserine intermediate. Mg(2+)-binding residues include serine 100, aspartate 240, aspartate 242, and aspartate 244. Serine 100 is modified (phosphoserine).

It belongs to the phosphohexose mutase family. Requires Mg(2+) as cofactor. In terms of processing, activated by phosphorylation.

The enzyme catalyses alpha-D-glucosamine 1-phosphate = D-glucosamine 6-phosphate. Its function is as follows. Catalyzes the conversion of glucosamine-6-phosphate to glucosamine-1-phosphate. The chain is Phosphoglucosamine mutase from Clostridium acetobutylicum (strain ATCC 824 / DSM 792 / JCM 1419 / IAM 19013 / LMG 5710 / NBRC 13948 / NRRL B-527 / VKM B-1787 / 2291 / W).